The sequence spans 607 residues: MYHSIKRFLIGKPLKSQAAGEQKLTKLKALAMLSSDALSSVAYGTEQILIILATISAAAFWYSIPIAVGVLILLLALILSYRQIIYAYPQGGGAYIVSKENLGEKPGLIAGGSLLVDYILTVAVSISAGTDAITSAFPALHDYHVPIAIFLVLVIMILNLRGLSESASILAYPVYLFVVALLVLIAVGLFKLMTGQIDQPAHHTSLGTPVAGITLFLLLKAFSSGCSALTGVEAISNAIPAFKNPPARNAARTLAMMGILLAILFSGITVLAYGYGTAPKPDETVVSQIASETFGRNVFYYVIQGVTSLILVLAANTGFSAFPQLAFNLARDQYMPRMFTVRGDRLGFSNGIIFLGFASIVLIILFGGQTEHLIPLYAVGVFIPFTLSQTGMCMKWIKQKPKGWIGKMLINSCGALISFMVLSILFVTKFNVVWPVLIFMPIVVLLFFAIKNHYTAVGEQLRIVDKEPEEIKGTVVIVPVAGVTTVVQKSIHYAKSLSDQVIAVHVSFDREQEKKFEKRWEELNNGVRLVTLHSSYRSLVHPFDKFLETVEAKAKKEQFSVMVLFPQFITKKRWHTILHNQSAFLLRVRLFWKKDIMVATLPYHFKK.

Residues 1–30 (MYHSIKRFLIGKPLKSQAAGEQKLTKLKAL) lie on the Cytoplasmic side of the membrane. A helical transmembrane segment spans residues 31–49 (AMLSSDALSSVAYGTEQIL). Residues Asp36 and Tyr43 each contribute to the K(+) site. Residues 50–62 (IILATISAAAFWY) lie on the Extracellular side of the membrane. A helical transmembrane segment spans residues 63–84 (SIPIAVGVLILLLALILSYRQI). The Cytoplasmic segment spans residues 85–105 (IYAYPQGGGAYIVSKENLGEK). A helical membrane pass occupies residues 106-134 (PGLIAGGSLLVDYILTVAVSISAGTDAIT). 2 residues coordinate K(+): Asp117 and Ser125. Residues 135–142 (SAFPALHD) are Extracellular-facing. The helical transmembrane segment at 143 to 162 (YHVPIAIFLVLVIMILNLRG) threads the bilayer. The Cytoplasmic portion of the chain corresponds to 163 to 166 (LSES). Residues 167–190 (ASILAYPVYLFVVALLVLIAVGLF) traverse the membrane as a helical segment. Over 191-214 (KLMTGQIDQPAHHTSLGTPVAGIT) the chain is Extracellular. A helical transmembrane segment spans residues 215–238 (LFLLLKAFSSGCSALTGVEAISNA). The Cytoplasmic portion of the chain corresponds to 239 to 249 (IPAFKNPPARN). A helical membrane pass occupies residues 250–271 (AARTLAMMGILLAILFSGITVL). The Extracellular segment spans residues 272 to 298 (AYGYGTAPKPDETVVSQIASETFGRNV). The helical transmembrane segment at 299 to 323 (FYYVIQGVTSLILVLAANTGFSAFP) threads the bilayer. Topologically, residues 324–347 (QLAFNLARDQYMPRMFTVRGDRLG) are cytoplasmic. The chain crosses the membrane as a helical span at residues 348 to 366 (FSNGIIFLGFASIVLIILF). Residues 367 to 372 (GGQTEH) are Extracellular-facing. The chain crosses the membrane as a helical span at residues 373 to 393 (LIPLYAVGVFIPFTLSQTGMC). Residues 394–405 (MKWIKQKPKGWI) are Cytoplasmic-facing. The helical transmembrane segment at 406-428 (GKMLINSCGALISFMVLSILFVT) threads the bilayer. Topologically, residues 429-431 (KFN) are extracellular. The chain crosses the membrane as a helical span at residues 432–447 (VVWPVLIFMPIVVLLF). Residues 448-607 (FAIKNHYTAV…VATLPYHFKK (160 aa)) are Cytoplasmic-facing.

This sequence belongs to the amino acid-polyamine-organocation (APC) superfamily. Homodimer.

The protein resides in the cell membrane. The catalysed reaction is K(+)(in) + H(+)(in) = K(+)(out) + H(+)(out). Its activity is regulated as follows. Potassium uptake increases at lower external pH and is abolished by the proton ionophore carbonyl cyanide m-chlorophenylhydrazone (CCCP). Binds cyclic di-AMP (c-di-AMP), which inhibits the potassium transport activity. Its function is as follows. High-affinity potassium transporter. Functions as a K(+)/H(+) symporter. In Bacillus subtilis (strain 168), this protein is Potassium transporter KimA.